A 72-amino-acid chain; its full sequence is Translation initiation factor IF-1 (72 aa).

An S1-like domain is found at 1 to 72 (MSKEEAIEVE…TRGRITYRAK (72 aa)).

This sequence belongs to the IF-1 family. Component of the 30S ribosomal translation pre-initiation complex which assembles on the 30S ribosome in the order IF-2 and IF-3, IF-1 and N-formylmethionyl-tRNA(fMet); mRNA recruitment can occur at any time during PIC assembly.

The protein resides in the cytoplasm. Its function is as follows. One of the essential components for the initiation of protein synthesis. Stabilizes the binding of IF-2 and IF-3 on the 30S subunit to which N-formylmethionyl-tRNA(fMet) subsequently binds. Helps modulate mRNA selection, yielding the 30S pre-initiation complex (PIC). Upon addition of the 50S ribosomal subunit IF-1, IF-2 and IF-3 are released leaving the mature 70S translation initiation complex. The sequence is that of Translation initiation factor IF-1 from Geobacter sulfurreducens (strain ATCC 51573 / DSM 12127 / PCA).